The sequence spans 562 residues: Dihydroxy-acid dehydratase (562 aa).

Mg(2+) is bound at residue aspartate 80. Residue cysteine 121 coordinates [2Fe-2S] cluster. Mg(2+) contacts are provided by aspartate 122 and lysine 123. Lysine 123 bears the N6-carboxylysine mark. Cysteine 194 contributes to the [2Fe-2S] cluster binding site. Residue glutamate 446 participates in Mg(2+) binding. The active-site Proton acceptor is serine 472.

It belongs to the IlvD/Edd family. As to quaternary structure, homodimer. [2Fe-2S] cluster is required as a cofactor. The cofactor is Mg(2+).

The catalysed reaction is (2R)-2,3-dihydroxy-3-methylbutanoate = 3-methyl-2-oxobutanoate + H2O. It catalyses the reaction (2R,3R)-2,3-dihydroxy-3-methylpentanoate = (S)-3-methyl-2-oxopentanoate + H2O. It participates in amino-acid biosynthesis; L-isoleucine biosynthesis; L-isoleucine from 2-oxobutanoate: step 3/4. Its pathway is amino-acid biosynthesis; L-valine biosynthesis; L-valine from pyruvate: step 3/4. In terms of biological role, functions in the biosynthesis of branched-chain amino acids. Catalyzes the dehydration of (2R,3R)-2,3-dihydroxy-3-methylpentanoate (2,3-dihydroxy-3-methylvalerate) into 2-oxo-3-methylpentanoate (2-oxo-3-methylvalerate) and of (2R)-2,3-dihydroxy-3-methylbutanoate (2,3-dihydroxyisovalerate) into 2-oxo-3-methylbutanoate (2-oxoisovalerate), the penultimate precursor to L-isoleucine and L-valine, respectively. In Staphylococcus aureus (strain MRSA252), this protein is Dihydroxy-acid dehydratase.